The following is a 65-amino-acid chain: U2-theraphotoxin-Pc1a (65 aa).

The first 20 residues, 1–20 (MGFKLVLFIAVLTLVGSSNA), serve as a signal peptide directing secretion. A propeptide spanning residues 21-36 (EISAKMDSRDSPMIQE) is cleaved from the precursor. Disulfide bonds link cysteine 39–cysteine 56, cysteine 46–cysteine 59, and cysteine 55–cysteine 64.

This sequence belongs to the neurotoxin 36 family. 02 subfamily. In terms of tissue distribution, expressed by the venom gland.

It is found in the secreted. Functionally, possesses strong antiplasmodial activity against the intra-erythrocyte stage of P.falciparum in vitro. IC(50) for inhibiting P.falciparum growth is 1.15 uM. Specifically interacts with infected erythrocytes. Does not lyse erythrocytes, is not cytotoxic to nucleated mammalian cells, and does not inhibit neuromuscular function. Has neither antibacterial nor antifungal activity. The protein is U2-theraphotoxin-Pc1a of Psalmopoeus cambridgei (Trinidad chevron tarantula).